The following is a 272-amino-acid chain: HMP-PP phosphatase (272 aa).

Asp-8 acts as the Nucleophile in catalysis. Mg(2+) is bound by residues Asp-8, Asp-10, and Asp-212.

This sequence belongs to the HAD-like hydrolase superfamily. Cof family. Mg(2+) is required as a cofactor.

The catalysed reaction is 4-amino-2-methyl-5-(diphosphooxymethyl)pyrimidine + H2O = 4-amino-2-methyl-5-(phosphooxymethyl)pyrimidine + phosphate + H(+). Functionally, catalyzes the hydrolysis of 4-amino-2-methyl-5-hydroxymethylpyrimidine pyrophosphate (HMP-PP) to 4-amino-2-methyl-5-hydroxymethylpyrimidine phosphate (HMP-P). In Salmonella typhi, this protein is HMP-PP phosphatase.